We begin with the raw amino-acid sequence, 249 residues long: ATP synthase subunit a (249 aa).

The next 6 membrane-spanning stretches (helical) occupy residues 30–50 (QSPV…YVGM), 86–106 (FFPF…LGLL), 115–135 (HIAV…IVSL), 142–162 (FFAH…LVPI), 191–211 (MFAA…VLAV), and 218–238 (VALM…FAIL).

This sequence belongs to the ATPase A chain family. In terms of assembly, F-type ATPases have 2 components, CF(1) - the catalytic core - and CF(0) - the membrane proton channel. CF(1) has five subunits: alpha(3), beta(3), gamma(1), delta(1), epsilon(1). CF(0) has three main subunits: a(1), b(2) and c(9-12). The alpha and beta chains form an alternating ring which encloses part of the gamma chain. CF(1) is attached to CF(0) by a central stalk formed by the gamma and epsilon chains, while a peripheral stalk is formed by the delta and b chains.

The protein localises to the cell inner membrane. Its function is as follows. Key component of the proton channel; it plays a direct role in the translocation of protons across the membrane. This chain is ATP synthase subunit a, found in Gluconacetobacter diazotrophicus (strain ATCC 49037 / DSM 5601 / CCUG 37298 / CIP 103539 / LMG 7603 / PAl5).